Reading from the N-terminus, the 876-residue chain is Eukaryotic translation initiation factor 3 subunit C (876 aa).

Disordered regions lie at residues Met1–Ala25 and Ser154–Gln233. Residues Ser11–Glu20 are compositionally biased toward acidic residues. Basic and acidic residues-rich tracts occupy residues Ser154–Ser172 and Lys182–Pro192. Positions Ser206 to Ser219 are enriched in low complexity. In terms of domain architecture, PCI spans Phe632–Pro808. Residues Phe839–Asp876 form a disordered region. Residues Gly848 to Asn861 show a composition bias toward basic and acidic residues.

Belongs to the eIF-3 subunit C family. Component of the eukaryotic translation initiation factor 3 (eIF-3) complex.

The protein resides in the cytoplasm. Its function is as follows. Component of the eukaryotic translation initiation factor 3 (eIF-3) complex, which is involved in protein synthesis of a specialized repertoire of mRNAs and, together with other initiation factors, stimulates binding of mRNA and methionyl-tRNAi to the 40S ribosome. The eIF-3 complex specifically targets and initiates translation of a subset of mRNAs involved in cell proliferation. This is Eukaryotic translation initiation factor 3 subunit C from Bombyx mori (Silk moth).